A 370-amino-acid polypeptide reads, in one-letter code: tRNA-specific 2-thiouridylase MnmA (370 aa).

ATP-binding positions include A24–S31 and L50. C118 acts as the Nucleophile in catalysis. C118 and C214 form a disulfide bridge. An ATP-binding site is contributed by G142. Positions K164–Q166 are interaction with tRNA. C214 functions as the Cysteine persulfide intermediate in the catalytic mechanism.

It belongs to the MnmA/TRMU family.

It is found in the cytoplasm. The catalysed reaction is S-sulfanyl-L-cysteinyl-[protein] + uridine(34) in tRNA + AH2 + ATP = 2-thiouridine(34) in tRNA + L-cysteinyl-[protein] + A + AMP + diphosphate + H(+). Functionally, catalyzes the 2-thiolation of uridine at the wobble position (U34) of tRNA, leading to the formation of s(2)U34. The polypeptide is tRNA-specific 2-thiouridylase MnmA (Ehrlichia ruminantium (strain Gardel)).